The following is a 458-amino-acid chain: Bifunctional protein GlmU (458 aa).

Residues 1 to 230 (MLQVDVVILA…DWEVSGVNDK (230 aa)) are pyrophosphorylase. UDP-N-acetyl-alpha-D-glucosamine-binding positions include 9 to 12 (LAAG), Lys-23, Gln-75, and 80 to 81 (GT). Asp-104 is a binding site for Mg(2+). Residues Gly-139, Glu-155, Asn-170, and Asn-228 each coordinate UDP-N-acetyl-alpha-D-glucosamine. Residue Asn-228 participates in Mg(2+) binding. A linker region spans residues 231 to 251 (IQLSILERAHQQDTANRLMEQ). Positions 252 to 458 (GVMFADPARF…NWKRPRKDRN (207 aa)) are N-acetyltransferase. Residues Arg-334 and Lys-352 each contribute to the UDP-N-acetyl-alpha-D-glucosamine site. His-364 acts as the Proton acceptor in catalysis. Residues Tyr-367 and Asn-378 each contribute to the UDP-N-acetyl-alpha-D-glucosamine site. Acetyl-CoA-binding positions include Ala-381, 387 to 388 (NY), Ser-406, Ala-424, and Arg-441.

It in the N-terminal section; belongs to the N-acetylglucosamine-1-phosphate uridyltransferase family. The protein in the C-terminal section; belongs to the transferase hexapeptide repeat family. Homotrimer. The cofactor is Mg(2+).

The protein resides in the cytoplasm. The enzyme catalyses alpha-D-glucosamine 1-phosphate + acetyl-CoA = N-acetyl-alpha-D-glucosamine 1-phosphate + CoA + H(+). The catalysed reaction is N-acetyl-alpha-D-glucosamine 1-phosphate + UTP + H(+) = UDP-N-acetyl-alpha-D-glucosamine + diphosphate. It functions in the pathway nucleotide-sugar biosynthesis; UDP-N-acetyl-alpha-D-glucosamine biosynthesis; N-acetyl-alpha-D-glucosamine 1-phosphate from alpha-D-glucosamine 6-phosphate (route II): step 2/2. The protein operates within nucleotide-sugar biosynthesis; UDP-N-acetyl-alpha-D-glucosamine biosynthesis; UDP-N-acetyl-alpha-D-glucosamine from N-acetyl-alpha-D-glucosamine 1-phosphate: step 1/1. Its pathway is bacterial outer membrane biogenesis; LPS lipid A biosynthesis. Catalyzes the last two sequential reactions in the de novo biosynthetic pathway for UDP-N-acetylglucosamine (UDP-GlcNAc). The C-terminal domain catalyzes the transfer of acetyl group from acetyl coenzyme A to glucosamine-1-phosphate (GlcN-1-P) to produce N-acetylglucosamine-1-phosphate (GlcNAc-1-P), which is converted into UDP-GlcNAc by the transfer of uridine 5-monophosphate (from uridine 5-triphosphate), a reaction catalyzed by the N-terminal domain. In Nitrosomonas europaea (strain ATCC 19718 / CIP 103999 / KCTC 2705 / NBRC 14298), this protein is Bifunctional protein GlmU.